Reading from the N-terminus, the 187-residue chain is Putative manganese efflux pump MntP (187 aa).

6 helical membrane passes run 8-28 (FLSI…GFII), 39-59 (IALF…LTGL), 65-85 (LANF…GKMI), 106-126 (LFAL…GLSV), 131-151 (ILLA…IGVF), and 166-186 (ILGG…GLII).

The protein belongs to the MntP (TC 9.B.29) family.

It is found in the cell inner membrane. Functionally, probably functions as a manganese efflux pump. The polypeptide is Putative manganese efflux pump MntP (Rippkaea orientalis (strain PCC 8801 / RF-1) (Cyanothece sp. (strain PCC 8801))).